A 296-amino-acid chain; its full sequence is Probable porphobilinogen deaminase (296 aa).

Residue Cys-241 is modified to S-(dipyrrolylmethanemethyl)cysteine.

The protein belongs to the HMBS family. Dipyrromethane is required as a cofactor.

The enzyme catalyses 4 porphobilinogen + H2O = hydroxymethylbilane + 4 NH4(+). It participates in porphyrin-containing compound metabolism; protoporphyrin-IX biosynthesis; coproporphyrinogen-III from 5-aminolevulinate: step 2/4. Tetrapolymerization of the monopyrrole PBG into the hydroxymethylbilane pre-uroporphyrinogen in several discrete steps. The chain is Probable porphobilinogen deaminase from Pyrobaculum calidifontis (strain DSM 21063 / JCM 11548 / VA1).